A 150-amino-acid polypeptide reads, in one-letter code: Phosphoribosyl-AMP cyclohydrolase (150 aa).

Asp93 contacts Mg(2+). Cys94 is a binding site for Zn(2+). Residues Asp95 and Asp97 each coordinate Mg(2+). The Zn(2+) site is built by Cys112 and Cys119.

This sequence belongs to the PRA-CH family. As to quaternary structure, homodimer. The cofactor is Mg(2+). Zn(2+) serves as cofactor.

The protein resides in the cytoplasm. The catalysed reaction is 1-(5-phospho-beta-D-ribosyl)-5'-AMP + H2O = 1-(5-phospho-beta-D-ribosyl)-5-[(5-phospho-beta-D-ribosylamino)methylideneamino]imidazole-4-carboxamide. The protein operates within amino-acid biosynthesis; L-histidine biosynthesis; L-histidine from 5-phospho-alpha-D-ribose 1-diphosphate: step 3/9. Functionally, catalyzes the hydrolysis of the adenine ring of phosphoribosyl-AMP. In Rhizobium leguminosarum bv. trifolii (strain WSM2304), this protein is Phosphoribosyl-AMP cyclohydrolase.